The primary structure comprises 244 residues: Probable 2-phosphosulfolactate phosphatase (244 aa).

Belongs to the ComB family. The cofactor is Mg(2+).

It carries out the reaction (2R)-O-phospho-3-sulfolactate + H2O = (2R)-3-sulfolactate + phosphate. This is Probable 2-phosphosulfolactate phosphatase from Thermosynechococcus vestitus (strain NIES-2133 / IAM M-273 / BP-1).